The primary structure comprises 489 residues: Pre-glycoprotein polyprotein GP complex (489 aa).

G2 carries N-myristoyl glycine; by host lipidation. Residues 2-17 (GQIVTFFQEVPHILEE) lie on the Extracellular side of the membrane. The helical transmembrane segment at 18-33 (VMNIVLMTLSILAILK) threads the bilayer. Over 34–58 (GIYNVMTCGIIGLITFLFLCGRSCS) the chain is Cytoplasmic. Position 57 (C57) interacts with Zn(2+). The Extracellular segment spans residues 59-430 (SIYKDNYEFF…QSTTPLGLVD (372 aa)). N-linked (GlcNAc...) asparagine; by host glycans are attached at residues N78, N88, N98, N108, N118, and N166. 6 disulfides stabilise this stretch: C85–C229, C117–C154, C179–C210, C277–C290, C299–C308, and C362–C383. N-linked (GlcNAc...) asparagine; by host glycosylation is present at N222. N-linked (GlcNAc...) asparagine; by host glycosylation is found at N363, N371, N388, and N393. Residues 431–451 (LFVFSTSFYLISVFLHLIKIP) traverse the membrane as a helical segment. Topologically, residues 452–489 (THRHIKGKPCPKPHRLNHMAICSCGFYKQPGLPTQWKR) are cytoplasmic. The Zn(2+) site is built by H453, H455, C461, H465, C473, and C475.

This sequence belongs to the arenaviridae GPC protein family. Interacts with glycoprotein G2. Part of the GP complex (GP-C) together with glycoprotein G1 and glycoprotein G2. The GP-complex interacts with protein Z, which interacts with ribonucleocapsid; these interactions may induce virion budding. In terms of assembly, homotrimer; disulfide-linked. In pre-fusion state, G1 homotrimers bind G2 homotrimers via ionic interactions. Part of the GP complex (GP-C) together with glycoprotein G2 and the stable signal peptide. The GP-complex interacts with protein Z, which interacts with ribonucleocapsid; these interactions may induce virion budding. As to quaternary structure, homotrimer. Interacts with the stable signal peptide. In pre-fusion state, G2 homotrimers bind G1 homotrimers via ionic interactions. Part of the GP complex (GP-C) together with glycoprotein G1 and the stable signal peptide. Acidification in the endosome triggers rearrangements, which ultimately leads to a 6 helix bundle formed by the two heptad repeat domains (HR1 and HR2) in post-fusion state. The GP-complex interacts with protein Z, which interacts with ribonucleocapsid; these interactions may induce virion budding. In terms of processing, specific enzymatic cleavages in vivo yield mature proteins. GP-C polyprotein is cleaved in the endoplasmic reticulum by the host protease MBTPS1. Only cleaved glycoprotein is incorporated into virions. Post-translationally, the SSP remains stably associated with the GP complex following cleavage by signal peptidase and plays crucial roles in the trafficking of GP through the secretory pathway. Myristoylation is necessary for GP2-mediated fusion activity.

It localises to the virion membrane. It is found in the host endoplasmic reticulum membrane. The protein localises to the host Golgi apparatus membrane. The protein resides in the host cell membrane. Functionally, functions as a cleaved signal peptide that is retained as the third component of the GP complex (GP-C). Helps to stabilize the spike complex in its native conformation. The SSP is required for efficient glycoprotein expression, post-translational maturation cleavage of G1 and G2, glycoprotein transport to the cell surface plasma membrane, formation of infectious virus particles, and acid pH-dependent glycoprotein-mediated cell fusion. Its function is as follows. Forms the virion spikes together with glycoprotein G2. The glycoprotein spike trimers are connected to the underlying matrix. Interacts with the host receptor leading to virus endocytosis. Forms the virion spikes together with glycoprotein G1. The glycoprotein spike trimers are connected to the underlying matrix. Class I viral fusion protein that directs fusion of viral and host endosomal membranes, leading to delivery of the nucleocapsid into the cytoplasm. Membrane fusion is mediated by irreversible conformational changes induced by acidification. The protein is Pre-glycoprotein polyprotein GP complex of Mastomys natalensis (African soft-furred rat).